Consider the following 180-residue polypeptide: NAD(P)H-quinone oxidoreductase subunit I, chloroplastic (180 aa).

4Fe-4S ferredoxin-type domains lie at 55 to 84 (GRIHFEFDKCIACEVCVRVCPIDLPVVDWR) and 95 to 124 (LNYSIDFGICIFCGNCVEYCPTNCLSMTEE). Cysteine 64, cysteine 67, cysteine 70, cysteine 74, cysteine 104, cysteine 107, cysteine 110, and cysteine 114 together coordinate [4Fe-4S] cluster.

It belongs to the complex I 23 kDa subunit family. In terms of assembly, NDH is composed of at least 16 different subunits, 5 of which are encoded in the nucleus. [4Fe-4S] cluster is required as a cofactor.

The protein resides in the plastid. It is found in the chloroplast thylakoid membrane. It catalyses the reaction a plastoquinone + NADH + (n+1) H(+)(in) = a plastoquinol + NAD(+) + n H(+)(out). The catalysed reaction is a plastoquinone + NADPH + (n+1) H(+)(in) = a plastoquinol + NADP(+) + n H(+)(out). NDH shuttles electrons from NAD(P)H:plastoquinone, via FMN and iron-sulfur (Fe-S) centers, to quinones in the photosynthetic chain and possibly in a chloroplast respiratory chain. The immediate electron acceptor for the enzyme in this species is believed to be plastoquinone. Couples the redox reaction to proton translocation, and thus conserves the redox energy in a proton gradient. This chain is NAD(P)H-quinone oxidoreductase subunit I, chloroplastic, found in Drimys granadensis.